The sequence spans 173 residues: Endosomal/vacuolar adapter protein YPT35 (173 aa).

The PX domain maps to 40-173 (ERAFVTNCTI…LVIQFLRPRK (134 aa)).

The protein belongs to the YPT35 family.

The protein localises to the endosome membrane. Its subcellular location is the vacuole membrane. In terms of biological role, recruits the lipid transfer protein VPS13 to endosomal and vacuolar membranes. The chain is Endosomal/vacuolar adapter protein YPT35 (YPT35) from Candida glabrata (strain ATCC 2001 / BCRC 20586 / JCM 3761 / NBRC 0622 / NRRL Y-65 / CBS 138) (Yeast).